The following is a 165-amino-acid chain: 6,7-dimethyl-8-ribityllumazine synthase 2 (165 aa).

5-amino-6-(D-ribitylamino)uracil is bound by residues W24, 56 to 58, and 80 to 82; these read SFE and LVV. R88 (proton donor) is an active-site residue. S113 contacts 5-amino-6-(D-ribitylamino)uracil. H127 is a (2S)-2-hydroxy-3-oxobutyl phosphate binding site.

Belongs to the DMRL synthase family.

The enzyme catalyses (2S)-2-hydroxy-3-oxobutyl phosphate + 5-amino-6-(D-ribitylamino)uracil = 6,7-dimethyl-8-(1-D-ribityl)lumazine + phosphate + 2 H2O + H(+). Its pathway is cofactor biosynthesis; riboflavin biosynthesis; riboflavin from 2-hydroxy-3-oxobutyl phosphate and 5-amino-6-(D-ribitylamino)uracil: step 1/2. In terms of biological role, catalyzes the formation of 6,7-dimethyl-8-ribityllumazine by condensation of 5-amino-6-(D-ribitylamino)uracil with 3,4-dihydroxy-2-butanone 4-phosphate. This is the penultimate step in the biosynthesis of riboflavin. The chain is 6,7-dimethyl-8-ribityllumazine synthase 2 from Bradyrhizobium diazoefficiens (strain JCM 10833 / BCRC 13528 / IAM 13628 / NBRC 14792 / USDA 110).